Consider the following 188-residue polypeptide: Crossover junction endodeoxyribonuclease RuvC (188 aa).

Active-site residues include aspartate 7, glutamate 68, and aspartate 141. Aspartate 7, glutamate 68, and aspartate 141 together coordinate Mg(2+).

Belongs to the RuvC family. Homodimer which binds Holliday junction (HJ) DNA. The HJ becomes 2-fold symmetrical on binding to RuvC with unstacked arms; it has a different conformation from HJ DNA in complex with RuvA. In the full resolvosome a probable DNA-RuvA(4)-RuvB(12)-RuvC(2) complex forms which resolves the HJ. It depends on Mg(2+) as a cofactor.

It is found in the cytoplasm. The catalysed reaction is Endonucleolytic cleavage at a junction such as a reciprocal single-stranded crossover between two homologous DNA duplexes (Holliday junction).. Functionally, the RuvA-RuvB-RuvC complex processes Holliday junction (HJ) DNA during genetic recombination and DNA repair. Endonuclease that resolves HJ intermediates. Cleaves cruciform DNA by making single-stranded nicks across the HJ at symmetrical positions within the homologous arms, yielding a 5'-phosphate and a 3'-hydroxyl group; requires a central core of homology in the junction. The consensus cleavage sequence is 5'-(A/T)TT(C/G)-3'. Cleavage occurs on the 3'-side of the TT dinucleotide at the point of strand exchange. HJ branch migration catalyzed by RuvA-RuvB allows RuvC to scan DNA until it finds its consensus sequence, where it cleaves and resolves the cruciform DNA. The protein is Crossover junction endodeoxyribonuclease RuvC of Streptomyces coelicolor (strain ATCC BAA-471 / A3(2) / M145).